A 600-amino-acid polypeptide reads, in one-letter code: Sodium- and chloride-dependent betaine transporter (600 aa).

The segment at 1–31 (MGTSEHVPLPTDEAKAKELEQSQHSEEPDRG) is disordered. Topologically, residues 1 to 38 (MGTSEHVPLPTDEAKAKELEQSQHSEEPDRGQWTGKFD) are cytoplasmic. The segment covering 12–30 (DEAKAKELEQSQHSEEPDR) has biased composition (basic and acidic residues). Helical transmembrane passes span 39 to 59 (FLMSMVAYAVGLGNVWRFPYL), 68 to 88 (FLVVYMIFFCLAAVPIFLMEV), and 116 to 136 (VVIAFMCIAYFCVIVAWAMFY). Residues 137 to 207 (MISSIAWVFP…DTGDISEFGG (71 aa)) lie on the Extracellular side of the membrane. An N-linked (GlcNAc...) asparagine glycan is attached at asparagine 165. The next 2 helical transmembrane spans lie at 208-228 (IQWELFFIMAAAWLIVYFALW) and 237-257 (FVYFCALFPYVLIFILLIRGL). N-linked (GlcNAc...) asparagine glycosylation occurs at asparagine 273. Helical transmembrane passes span 286–306 (AGTQVFYSYGVGFGALIALGS), 321–341 (MCFINGCTSITAGFAVFSILG), 378–398 (VFAVLFFLMITILGLDSQVCM), 420–440 (SLGIFCLFFFCIGIPMVTHSG), 454–474 (GYALLFVVFFEVVGLAYGFGA), 499–519 (FCAPATSLVLFVFCVVYYHPV), and 536–556 (WFLSSCSMVVIPGYAIYYLFF). Residues 557-600 (TNKHLTLKERVRKGLNLDGSFESPAKKNLVNNAEELKFIESSSQ) are Cytoplasmic-facing.

The protein belongs to the sodium:neurotransmitter symporter (SNF) family. Highly expressed in the head, the excretory canal, tail hypodermal cells, epidermis and vulval epithelial cells. Expressed in the excretory canal-associated neuron and in some non-amphidial sensory neurons in the head (at protein level).

It localises to the cell membrane. Its function is as follows. Betaine transporter dependent on Na(+) and Cl(-) ions that functions primarily in the epidermis to clear betaine from the extracellular space. Elicits current in response to betaine but not in response to GABA, L-carnitine, sarcosine, glycine or dimethylglycine. The sequence is that of Sodium- and chloride-dependent betaine transporter from Caenorhabditis elegans.